A 185-amino-acid polypeptide reads, in one-letter code: NOP protein chaperone 1 (185 aa).

Residues Ser-34, Ser-66, and Ser-177 each carry the phosphoserine modification. The disordered stretch occupies residues Ser-121–Gln-185.

As to quaternary structure, interacts with NOP58, RUVBL1 and RUVBL2; the interactions are direct and NOPCHAP1 bridges the association of NOP58 with RUVBL1:RUVBL2 even in absence of snoRNAs. The interactions with RUVBL1 and RUVBL2 are disrupted upon ATP binding.

The protein resides in the nucleus. Functionally, client-loading PAQosome/R2TP complex cofactor that selects NOP58 to promote box C/D small nucleolar ribonucleoprotein (snoRNP) assembly. Acts as a bridge between NOP58 and the R2TP complex via RUVBL1:RUVBL2. This chain is NOP protein chaperone 1, found in Mus musculus (Mouse).